A 495-amino-acid polypeptide reads, in one-letter code: MKSQLLSLAVAVSTISQGVVGQEPFGWPFKPMVTQDDLQNKIKLKDIMAGVEKLQSFSDAHPEKNRVFGGNGHKDTVEWIYNELKATGYYNVKKQEQVHLWSHAEAALSANGKDLKASAMSYSPPANKIMAELVVAKNNGCNATDYPENTQGKIVLIQRGVCSFGEKSSQAGDAKAIGAVVYNNVPGSLAGTLGGLDKRHVPTAGLSQEDGKNLASLVASGKVDVTMNVVSLFENRTTWNVIAETKGGDHNNVVMLGAHSDSVDAGPGINDNGSGSIGIMTVAKALTNFKLNNAVRFAWWTAEEFGLLGSTFYVDSLDDRELHKVKLYLNFDMIGSPNFANQIYDGDGSAYNMTGPAGSAEIEYLFEKFFDDQGLPHQPTAFTGRSDYSAFIKRNVPAGGLFTGAEVVKTPEQVKLFGGEAGVAYDKNYHGKGDTVANINKGAIFLNTRAIAYSVAEYARSLKGFPTRPKTGKRAVNPQYAKMPGGGCGHHTVFM.

The N-terminal stretch at Met-1–Gly-21 is a signal peptide. Positions Pro-124–Val-218 constitute a PA domain. Asn-142 and Asn-235 each carry an N-linked (GlcNAc...) asparagine glycan. Zn(2+)-binding residues include His-259 and Asp-271. Asn-272 carries N-linked (GlcNAc...) asparagine glycosylation. Residue Glu-303 is the Proton acceptor of the active site. The Zn(2+) site is built by Glu-304 and Asp-332. A glycan (N-linked (GlcNAc...) asparagine) is linked at Asn-352. His-430 is a binding site for Zn(2+).

It belongs to the peptidase M28 family. M28A subfamily. As to quaternary structure, monomer. It depends on Zn(2+) as a cofactor.

Its subcellular location is the secreted. Functionally, extracellular aminopeptidase that releases a wide variety of amino acids from natural peptides and contributes to pathogenicity. This Trichophyton equinum (Horse ringworm fungus) protein is Leucine aminopeptidase 2 (LAP2).